The chain runs to 644 residues: DNA mismatch repair protein MutL (644 aa).

This sequence belongs to the DNA mismatch repair MutL/HexB family.

In terms of biological role, this protein is involved in the repair of mismatches in DNA. It is required for dam-dependent methyl-directed DNA mismatch repair. May act as a 'molecular matchmaker', a protein that promotes the formation of a stable complex between two or more DNA-binding proteins in an ATP-dependent manner without itself being part of a final effector complex. The sequence is that of DNA mismatch repair protein MutL from Chlorobium chlorochromatii (strain CaD3).